We begin with the raw amino-acid sequence, 401 residues long: MSHRKFSAPRHGHMGFTPKKRSRTYRGRIKAFPKDDASKPIHLTAFLGYKAGMTHIVRDVDKPGSKVNKKEVVEAVSIIETPPMVIAGVTGYIDTPQGPRALTTIWAEHLSEEARRRFYSNWAKSKKKAFTKYAKKWQDEDGKKLIEADFAKLKKYCSSIRVIAHTQMKILRRRQKKAHLVEIQINGGTIEQKVDWAREHLEKQIQVDTVFSQDEMIDTIGVTKGHGFKGVTSRWHTKKLPRKTHKGLRKVACIGAWHPSRVAFTVARAGQKGFHHRTIINNKIYRIGKSALTEEGKNNGSTEFDLTQKTINPMGGFPRYGLVNQDYVMLRGAILGPKKRLITLRKSLITQTKRVAHEKINLKWIDTSSKTGHGRFQTTAEKRAFMGKLKRDFLAEAENKA.

The tract at residues 1–21 (MSHRKFSAPRHGHMGFTPKKR) is disordered.

It belongs to the universal ribosomal protein uL3 family.

The protein resides in the cytoplasm. Functionally, the L3 protein is a component of the large subunit of cytoplasmic ribosomes. This is Large ribosomal subunit protein uL3 (rpl-3) from Caenorhabditis briggsae.